A 258-amino-acid chain; its full sequence is Diacetyl reductase [(S)-acetoin forming] (258 aa).

Residue 8–32 (LVTGGAQGIGFKIAERLVEDGFKVA) coordinates NAD(+). S141 contributes to the substrate binding site. Catalysis depends on Y154, which acts as the Proton acceptor. The active site involves K158.

It belongs to the short-chain dehydrogenases/reductases (SDR) family.

The catalysed reaction is (S)-acetoin + NAD(+) = diacetyl + NADH + H(+). In terms of biological role, catalyzes the irreversible reduction of 2,3-butanediol to (S)-acetoin in the presence of NADH. This Staphylococcus aureus (strain Mu50 / ATCC 700699) protein is Diacetyl reductase [(S)-acetoin forming] (butA).